We begin with the raw amino-acid sequence, 255 residues long: uncharacterized protein (255 aa).

It belongs to the methyltransferase superfamily.

This is an uncharacterized protein from Mycobacterium ulcerans (strain Agy99).